Here is a 111-residue protein sequence, read N- to C-terminus: Large ribosomal subunit protein P2w (111 aa).

The interval 63–111 (ASVPSGGGVAVSAAPSSGGGGAAAPAEKKEAKKEEKEESDDDMGFSLFE) is disordered. Residues 88–98 (AEKKEAKKEEK) show a composition bias toward basic and acidic residues. Residue Ser101 is modified to Phosphoserine.

Belongs to the eukaryotic ribosomal protein P1/P2 family. P1 and P2 exist as dimers at the large ribosomal subunit.

Functionally, plays an important role in the elongation step of protein synthesis. In Arabidopsis thaliana (Mouse-ear cress), this protein is Large ribosomal subunit protein P2w (RPP2D).